Consider the following 263-residue polypeptide: tRNA uridine(34) hydroxylase (263 aa).

The region spanning glutamate 129–tyrosine 223 is the Rhodanese domain. Residue cysteine 183 is the Cysteine persulfide intermediate of the active site.

It belongs to the TrhO family.

It carries out the reaction uridine(34) in tRNA + AH2 + O2 = 5-hydroxyuridine(34) in tRNA + A + H2O. In terms of biological role, catalyzes oxygen-dependent 5-hydroxyuridine (ho5U) modification at position 34 in tRNAs. This chain is tRNA uridine(34) hydroxylase, found in Delftia acidovorans (strain DSM 14801 / SPH-1).